Reading from the N-terminus, the 78-residue chain is Defensin-like protein 141 (78 aa).

The signal sequence occupies residues 1-24 (MTKSIISAFFIILILGMMVNEIEG). 4 cysteine pairs are disulfide-bonded: Cys31/Cys76, Cys40/Cys59, Cys45/Cys70, and Cys49/Cys72.

Belongs to the DEFL family.

The protein resides in the secreted. This Arabidopsis thaliana (Mouse-ear cress) protein is Defensin-like protein 141 (LCR3).